Here is a 161-residue protein sequence, read N- to C-terminus: Suppressor of kinetochore protein 1 (161 aa).

The interaction with the F-box domain of F-box proteins stretch occupies residues 102 to 161 (VLASNYLDIKPLLDTGCKTVANMIRGKSPEDIRKTFNIPNDFTPEEEEQIRKENEWAEDR).

This sequence belongs to the SKP1 family. In terms of assembly, essential component of the E3 ubiquitin ligase Skp1-Cullin-1-F-box (SCF) complex. Interacts with cul1, fbh1, mcs2, pip1, pof1, pof2, pof3, pof4, pof5, pof6, pof7, pof8, pof9, pof10, pof11, pof12, pof13, pof14, pop1, pop2 and tfb3. Forms a complex with pof6 and sip1. Component of the RAVE complex composed of rav1, rav2 and skp1.

The protein resides in the cytoplasm. Its subcellular location is the nucleus. Required for cig2 degradation in the G2 and M phases of the cell cycle. Together with pof6, essential for septum processing and cell separation. Involved in mitotic progression, essential for the execution of anaphase B; required for coordinated structural alterations of mitotic spindles and segregation of nuclear membrane structures at anaphase. Involved in the DNA damage checkpoint pathway and maintenance of genome integrity. Component of the RAVE complex which is required for stable assembly of the vacuolar ATPase complex V-ATPase. The protein is Suppressor of kinetochore protein 1 of Schizosaccharomyces pombe (strain 972 / ATCC 24843) (Fission yeast).